Reading from the N-terminus, the 546-residue chain is Putative serine/threonine-protein kinase L268 (546 aa).

Residues 1–112 (MVCFSKYSGI…ILQTLDFHLV (112 aa)) form the Cyclin N-terminal domain. The Protein kinase domain maps to 260–544 (ITVVKNLGEG…QTLEEFNKFN (285 aa)). ATP-binding positions include 266–274 (LGEGTYGTV) and lysine 287. Aspartate 389 functions as the Proton acceptor in the catalytic mechanism.

This sequence belongs to the protein kinase superfamily. Ser/Thr protein kinase family.

It catalyses the reaction L-seryl-[protein] + ATP = O-phospho-L-seryl-[protein] + ADP + H(+). It carries out the reaction L-threonyl-[protein] + ATP = O-phospho-L-threonyl-[protein] + ADP + H(+). The polypeptide is Putative serine/threonine-protein kinase L268 (Acanthamoeba polyphaga mimivirus (APMV)).